Consider the following 146-residue polypeptide: MDIQAIKEFLPHRYPFLLVDRVLECEPGKRLLAIKNVTYNEPFFQGHFPRVPIMPGVLIIEALAQTTGLLASETAPDVLGKGATYYLVGLDKVRFKRPVVPGDQLRLEATYLRHKRNIWAFACRADVEGEFVASAEIMCAAAEQGS.

The active site involves H47.

Belongs to the thioester dehydratase family. FabZ subfamily.

It is found in the cytoplasm. It catalyses the reaction a (3R)-hydroxyacyl-[ACP] = a (2E)-enoyl-[ACP] + H2O. Involved in unsaturated fatty acids biosynthesis. Catalyzes the dehydration of short chain beta-hydroxyacyl-ACPs and long chain saturated and unsaturated beta-hydroxyacyl-ACPs. This is 3-hydroxyacyl-[acyl-carrier-protein] dehydratase FabZ from Methylococcus capsulatus (strain ATCC 33009 / NCIMB 11132 / Bath).